Here is a 296-residue protein sequence, read N- to C-terminus: Phosphoribosylaminoimidazole-succinocarboxamide synthase (296 aa).

The protein belongs to the SAICAR synthetase family.

The enzyme catalyses 5-amino-1-(5-phospho-D-ribosyl)imidazole-4-carboxylate + L-aspartate + ATP = (2S)-2-[5-amino-1-(5-phospho-beta-D-ribosyl)imidazole-4-carboxamido]succinate + ADP + phosphate + 2 H(+). Its pathway is purine metabolism; IMP biosynthesis via de novo pathway; 5-amino-1-(5-phospho-D-ribosyl)imidazole-4-carboxamide from 5-amino-1-(5-phospho-D-ribosyl)imidazole-4-carboxylate: step 1/2. The sequence is that of Phosphoribosylaminoimidazole-succinocarboxamide synthase from Geobacter sulfurreducens (strain ATCC 51573 / DSM 12127 / PCA).